An 823-amino-acid polypeptide reads, in one-letter code: DNA topoisomerase 4 subunit A (823 aa).

The region spanning 30 to 496 (LPDIRDGLKP…KAIEIDTASL (467 aa)) is the Topo IIA-type catalytic domain. Tyr-118 acts as the O-(5'-phospho-DNA)-tyrosine intermediate in catalysis.

The protein belongs to the type II topoisomerase GyrA/ParC subunit family. ParC type 2 subfamily. In terms of assembly, heterotetramer composed of ParC and ParE.

The protein resides in the cell membrane. The enzyme catalyses ATP-dependent breakage, passage and rejoining of double-stranded DNA.. With respect to regulation, inhibited by quinolones, such as levofloxacin. Its function is as follows. Topoisomerase IV is essential for chromosome segregation. It relaxes supercoiled DNA. Performs the decatenation events required during the replication of a circular DNA molecule. The protein is DNA topoisomerase 4 subunit A of Streptococcus pneumoniae serotype 4 (strain ATCC BAA-334 / TIGR4).